Here is a 173-residue protein sequence, read N- to C-terminus: Bifunctional protein PyrR (173 aa).

Positions 93 to 105 (VILVDDVLYTGRT) match the PRPP-binding motif.

Belongs to the purine/pyrimidine phosphoribosyltransferase family. PyrR subfamily. In terms of assembly, homodimer and homohexamer; in equilibrium.

The catalysed reaction is UMP + diphosphate = 5-phospho-alpha-D-ribose 1-diphosphate + uracil. Its function is as follows. Regulates transcriptional attenuation of the pyrimidine nucleotide (pyr) operon by binding in a uridine-dependent manner to specific sites on pyr mRNA. This disrupts an antiterminator hairpin in the RNA and favors formation of a downstream transcription terminator, leading to a reduced expression of downstream genes. Functionally, also displays a weak uracil phosphoribosyltransferase activity which is not physiologically significant. The polypeptide is Bifunctional protein PyrR (Streptococcus pneumoniae (strain 70585)).